Consider the following 155-residue polypeptide: DNA gyrase inhibitor (155 aa).

This sequence belongs to the DNA gyrase inhibitor family. Interacts with DNA gyrase.

It is found in the cytoplasm. Functionally, inhibits the supercoiling activity of DNA gyrase. Acts by inhibiting DNA gyrase at an early step, prior to (or at the step of) binding of DNA by the gyrase. It protects cells against toxins that target DNA gyrase, by inhibiting activity of these toxins and reducing the formation of lethal double-strand breaks in the cell. This chain is DNA gyrase inhibitor, found in Erwinia billingiae (strain Eb661).